The primary structure comprises 517 residues: Squalene epoxidase 6 (517 aa).

2 helical membrane passes run 3 to 23 (FTHV…VFYL) and 45 to 65 (AADV…YALA). FAD-binding positions include 55 to 56 (VG), 75 to 76 (ER), R83, F88, R156, V172, D336, and M349. A helical membrane pass occupies residues 447–467 (LVYHLCAITLSSIGQLLSPFP).

The protein belongs to the squalene monooxygenase family. Requires FAD as cofactor. Expressed in seedlings, leaves, stems, inflorescences and siliques.

The protein localises to the membrane. It catalyses the reaction squalene + reduced [NADPH--hemoprotein reductase] + O2 = (S)-2,3-epoxysqualene + oxidized [NADPH--hemoprotein reductase] + H2O + H(+). It participates in terpene metabolism; lanosterol biosynthesis; lanosterol from farnesyl diphosphate: step 2/3. In terms of biological role, catalyzes the stereospecific oxidation of squalene to (S)-2,3-epoxysqualene, and is considered to be a rate-limiting enzyme in steroid biosynthesis. This is Squalene epoxidase 6 (SQE6) from Arabidopsis thaliana (Mouse-ear cress).